Consider the following 632-residue polypeptide: Chaperone protein HtpG (632 aa).

The segment at 1 to 339 is a; substrate-binding; it reads MTQQTMSFQA…SSDLPLNVSR (339 aa). The tract at residues 340–559 is b; it reads EILQESRDVK…DNDMSGYLQR (220 aa). Residues 560 to 632 are c; the sequence is MLKAAGQSAP…TNALLLSRAA (73 aa).

The protein belongs to the heat shock protein 90 family. Homodimer.

Its subcellular location is the cytoplasm. Functionally, molecular chaperone. Has ATPase activity. The sequence is that of Chaperone protein HtpG from Burkholderia pseudomallei (strain 668).